The following is a 558-amino-acid chain: Aspartate--tRNA ligase 2, cytoplasmic (558 aa).

Low complexity predominate over residues 1-18; the sequence is MSSESEIPPLSSSTAAAE. The segment at 1–57 is disordered; sequence MSSESEIPPLSSSTAAAEESGEKTSKKAAKKEAAKLEKLRRRQEQEEATRRTASISL. Serine 2 carries the N-acetylserine modification. Residues 20-50 are compositionally biased toward basic and acidic residues; it reads SGEKTSKKAAKKEAAKLEKLRRRQEQEEATR. A DNA-binding region (OB) is located at residues 110 to 195; that stretch reads VLIRGRVHTN…QVEIQVRKVY (86 aa). An L-aspartate-binding site is contributed by glutamate 286. The tract at residues 308–311 is aspartate; that stretch reads QLHK. Arginine 330 contacts L-aspartate. ATP is bound by residues 330 to 332, 338 to 340, and glutamate 481; these read RAE and RHL. Residues glutamate 481 and serine 484 each coordinate Mg(2+). The L-aspartate site is built by serine 484 and arginine 488. 529–532 provides a ligand contact to ATP; the sequence is GLER.

It belongs to the class-II aminoacyl-tRNA synthetase family. Type 2 subfamily.

It localises to the cytoplasm. The protein localises to the cytosol. Its subcellular location is the endoplasmic reticulum. It carries out the reaction tRNA(Asp) + L-aspartate + ATP = L-aspartyl-tRNA(Asp) + AMP + diphosphate. In terms of biological role, catalyzes the specific attachment of an amino acid to its cognate tRNA in a 2 step reaction: the amino acid (AA) is first activated by ATP to form AA-AMP and then transferred to the acceptor end of the tRNA. Involved in the perception of beta-aminobutyric acid (BABA) and required for BABA priming effect in disease resistance. In Arabidopsis thaliana (Mouse-ear cress), this protein is Aspartate--tRNA ligase 2, cytoplasmic.